Here is a 188-residue protein sequence, read N- to C-terminus: UPF0397 protein LACR_0367 (188 aa).

Transmembrane regions (helical) follow at residues 14–34, 48–68, 80–100, 120–140, and 152–172; these read IVVA…LINI, AVLA…IGFI, APWW…GFGV, IVQF…GDIL, and QGVV…TLLL.

This sequence belongs to the UPF0397 family.

It is found in the cell membrane. The sequence is that of UPF0397 protein LACR_0367 from Lactococcus lactis subsp. cremoris (strain SK11).